Reading from the N-terminus, the 154-residue chain is uncharacterized protein (154 aa).

The HTH marR-type domain occupies 14 to 146 (AMNLYRVFAR…LIVLLKKAGI (133 aa)). Positions 60–83 (LQQIGSRLLLVSGNVTYVIDKLER) form a DNA-binding region, H-T-H motif.

This is an uncharacterized protein from Bacillus subtilis (strain 168).